Reading from the N-terminus, the 270-residue chain is Glucosamine-6-phosphate deaminase (270 aa).

Asp-72 serves as the catalytic Proton acceptor; for enolization step. Asp-141 (for ring-opening step) is an active-site residue. Residue His-143 is the Proton acceptor; for ring-opening step of the active site. The active-site For ring-opening step is Glu-148.

This sequence belongs to the glucosamine/galactosamine-6-phosphate isomerase family. NagB subfamily.

It carries out the reaction alpha-D-glucosamine 6-phosphate + H2O = beta-D-fructose 6-phosphate + NH4(+). The protein operates within amino-sugar metabolism; N-acetylneuraminate degradation; D-fructose 6-phosphate from N-acetylneuraminate: step 5/5. Allosterically activated by N-acetylglucosamine 6-phosphate (GlcNAc6P). In terms of biological role, catalyzes the reversible isomerization-deamination of glucosamine 6-phosphate (GlcN6P) to form fructose 6-phosphate (Fru6P) and ammonium ion. The chain is Glucosamine-6-phosphate deaminase from Bacteroides fragilis (strain ATCC 25285 / DSM 2151 / CCUG 4856 / JCM 11019 / LMG 10263 / NCTC 9343 / Onslow / VPI 2553 / EN-2).